The chain runs to 79 residues: MYIDITIDLKHYNGSVFDLRLSDYHPVKKVIDIAWQAQSVSMPPREGHWIRVVNKDKVFSGECKLSDCGITNGDRLEIL.

The protein belongs to the EsaB family.

Its function is as follows. Required for YukE secretion. Probable component or regulator of the ESX/ESAT-6-like secretion system (BsEss). This Bacillus subtilis (strain 168) protein is ESX secretion system protein YukD (yukD).